Reading from the N-terminus, the 197-residue chain is Xanthine phosphoribosyltransferase (197 aa).

Xanthine contacts are provided by L20 and T27. Residue 128–132 (ANGQA) participates in 5-phospho-alpha-D-ribose 1-diphosphate binding. K156 is a binding site for xanthine.

It belongs to the purine/pyrimidine phosphoribosyltransferase family. Xpt subfamily. In terms of assembly, homodimer.

It is found in the cytoplasm. The catalysed reaction is XMP + diphosphate = xanthine + 5-phospho-alpha-D-ribose 1-diphosphate. It functions in the pathway purine metabolism; XMP biosynthesis via salvage pathway; XMP from xanthine: step 1/1. Functionally, converts the preformed base xanthine, a product of nucleic acid breakdown, to xanthosine 5'-monophosphate (XMP), so it can be reused for RNA or DNA synthesis. The chain is Xanthine phosphoribosyltransferase from Lactococcus lactis subsp. cremoris (strain MG1363).